Here is a 287-residue protein sequence, read N- to C-terminus: Pantothenate synthetase (287 aa).

30–37 lines the ATP pocket; that stretch reads MGNLHSGH. His-37 functions as the Proton donor in the catalytic mechanism. Gln-61 is a binding site for (R)-pantoate. Residue Gln-61 coordinates beta-alanine. 149–152 is an ATP binding site; the sequence is GEKD. Residue Gln-155 participates in (R)-pantoate binding. Residues Val-178 and 186 to 189 each bind ATP; that span reads LSSR.

The protein belongs to the pantothenate synthetase family. As to quaternary structure, homodimer.

The protein localises to the cytoplasm. The catalysed reaction is (R)-pantoate + beta-alanine + ATP = (R)-pantothenate + AMP + diphosphate + H(+). Its pathway is cofactor biosynthesis; (R)-pantothenate biosynthesis; (R)-pantothenate from (R)-pantoate and beta-alanine: step 1/1. Catalyzes the condensation of pantoate with beta-alanine in an ATP-dependent reaction via a pantoyl-adenylate intermediate. The sequence is that of Pantothenate synthetase from Pseudomonas putida (strain GB-1).